Here is a 178-residue protein sequence, read N- to C-terminus: MSIENLKAALPEYAKDLKLNLGSISRTTVLDEEQLWGTLLASAAATRNAQVLAEIGAEAADNLSAQAYQAALGAVSIMGMNNVFYRGRGFLEGQYDDLRAGLRMNIIANPGVDKANFELWSFAVSSVNGCSHCVVAHEHTLREAGVGREAVLEALKAAAIVCGVAQALTAAQTLAAVG.

Residue Cys-130 is the Proton donor of the active site. The cysteines at positions 130 and 133 are disulfide-linked. Cys-133 (cysteine sulfenic acid (-SOH) intermediate) is an active-site residue.

The protein belongs to the AhpD family. In terms of assembly, homotrimer.

The catalysed reaction is N(6)-[(R)-dihydrolipoyl]-L-lysyl-[lipoyl-carrier protein] + a hydroperoxide = N(6)-[(R)-lipoyl]-L-lysyl-[lipoyl-carrier protein] + an alcohol + H2O. In terms of biological role, antioxidant protein with alkyl hydroperoxidase activity. Required for the reduction of the AhpC active site cysteine residues and for the regeneration of the AhpC enzyme activity. In Mycobacterium marinum (strain ATCC BAA-535 / M), this protein is Alkyl hydroperoxide reductase AhpD.